We begin with the raw amino-acid sequence, 452 residues long: Envelope glycoprotein D (452 aa).

The first 19 residues, 1–19 (MPAVLLVLYVNPPPSVCIL), serve as a signal peptide directing secretion. Topologically, residues 20-405 (TQKLSLGLYN…NSTFVGISVG (386 aa)) are virion surface. Residues N103 and N111 are each glycosylated (N-linked (GlcNAc...) asparagine; by host). 3 disulfide bridges follow: C138/C259, C176/C273, and C188/C197. A disordered region spans residues 331 to 365 (PDNHPGFDSVESEITQNKTDPKPGQADPKPNQPFK). N-linked (GlcNAc...) asparagine; by host glycosylation is found at N347 and N396. A helical transmembrane segment spans residues 406–422 (LGIAGLVLVGVILYVCL). The Intravirion segment spans residues 423–452 (RRKKELKKSAQNGLTRLRSTFKDVKYTQLP).

This sequence belongs to the herpesviridae glycoprotein D family.

The protein localises to the virion membrane. Functionally, envelope glycoprotein that binds to host cell entry receptors, promoting the virus entry into host cells. May trigger fusion with host membrane, by recruiting the fusion machinery composed of gB and gH/gL. The protein is Envelope glycoprotein D (gD) of Equine herpesvirus 1 (strain Ab4p) (EHV-1).